The chain runs to 242 residues: Probable transcriptional regulatory protein Cthe_2075 (242 aa).

It belongs to the TACO1 family.

The protein localises to the cytoplasm. This is Probable transcriptional regulatory protein Cthe_2075 from Acetivibrio thermocellus (strain ATCC 27405 / DSM 1237 / JCM 9322 / NBRC 103400 / NCIMB 10682 / NRRL B-4536 / VPI 7372) (Clostridium thermocellum).